Here is a 117-residue protein sequence, read N- to C-terminus: Large ribosomal subunit protein bL20 (117 aa).

This sequence belongs to the bacterial ribosomal protein bL20 family.

Its function is as follows. Binds directly to 23S ribosomal RNA and is necessary for the in vitro assembly process of the 50S ribosomal subunit. It is not involved in the protein synthesizing functions of that subunit. The polypeptide is Large ribosomal subunit protein bL20 (Natranaerobius thermophilus (strain ATCC BAA-1301 / DSM 18059 / JW/NM-WN-LF)).